Here is a 478-residue protein sequence, read N- to C-terminus: Zinc metalloproteinase/disintegrin (478 aa).

A signal peptide spans 1-20 (MIEVLLVTICLAAFPYQGSS). A propeptide spanning residues 21 to 187 (IILESGNVND…PIKKASQSNL (167 aa)) is cleaved from the precursor. 3 cysteine pairs are disulfide-bonded: Cys304–Cys384, Cys344–Cys368, and Cys346–Cys351. His329 serves as a coordination point for Zn(2+). Glu330 is an active-site residue. The Zn(2+) site is built by His333 and His339. Positions 390–405 (LRTDTVSTPVSGNELL) are excised as a propeptide. A Disintegrin domain is found at 397–478 (TPVSGNELLE…AGCPRNPFHA (82 aa)). 6 disulfides stabilise this stretch: Cys411–Cys426, Cys413–Cys421, Cys420–Cys443, Cys434–Cys440, Cys439–Cys464, and Cys452–Cys471. Residues 456–458 (RGD) carry the Cell attachment site motif.

It belongs to the venom metalloproteinase (M12B) family. P-II subfamily. P-IIa sub-subfamily. In terms of assembly, monomer. In terms of tissue distribution, expressed by the venom gland.

Its subcellular location is the secreted. Its function is as follows. Binds alpha-5/beta-1 (ITGAV/ITGB1), alpha-V/beta-3 (ITGAV/ITGB3) and alpha-M/beta-2 (ITGAM/ITGB2) integrins. Is a potent inhibitor of platelet aggregation induced by ADP, collagen, and thrombin. Induces neutrophil chemotaxis and inhibits the chemotaxis of human neutrophils toward fMLP, IL-8, and jarastatin itself. Directly activates an integrin-coupled signaling and modulate the MAPK pathway in different ways, leading the neutrophils to express different functional response. Induces Erk-2 translocation to nucleus and a delay of the spontaneous apoptosis of neutrophils. Increases the IL-8 mRNA levels in neutrophils. When injected simultaneously with melanoma cells in mice, jarastatin, flavoridin (FL) and kistrin (KR) significantly reduce tumor lung colonization. Inhibits mouse melanoma B16F10 cell growth in vitro. When it interacts with melanoma cells, it induces actin cytoskeleton rearrangement, increasing actin polymerization and PTK2/FAK1 phosphorylation. Interferes with NF-kappaB translocation in melanoma cells. In Bothrops jararaca (Jararaca), this protein is Zinc metalloproteinase/disintegrin.